The primary structure comprises 802 residues: Copper-exporting P-type ATPase (802 aa).

2 HMA domains span residues 5–70 (KKTT…YGVA) and 72–138 (ETVE…YDAS). Cysteine 16, cysteine 19, cysteine 83, and cysteine 86 together coordinate Cu(+). Helical transmembrane passes span 161–181 (LIIS…HLFN), 192–212 (WFQF…FYVG), 224–244 (MDVL…YEMV), 256–276 (LYFE…YLEA), 411–431 (YFVP…ITLV), and 438–458 (PALV…LGLA). Residue aspartate 495 is the 4-aspartylphosphate intermediate of the active site. Aspartate 690 and aspartate 694 together coordinate Mg(2+). 2 helical membrane-spanning segments follow: residues 748–767 (LFWA…LGLL) and 771–790 (VAGA…ALRL).

Belongs to the cation transport ATPase (P-type) (TC 3.A.3) family. Type IB subfamily.

The protein resides in the cell membrane. The enzyme catalyses Cu(+)(in) + ATP + H2O = Cu(+)(out) + ADP + phosphate + H(+). Its function is as follows. Involved in copper export. The polypeptide is Copper-exporting P-type ATPase (copA) (Staphylococcus aureus (strain USA300 / TCH1516)).